The chain runs to 334 residues: Atypical chemokine receptor 1 (334 aa).

Residues Met-1–Pro-61 lie on the Extracellular side of the membrane. N-linked (GlcNAc...) asparagine glycans are attached at residues Asn-16, Asn-26, and Asn-32. Intrachain disulfides connect Cys-49-Cys-274 and Cys-127-Cys-193. A helical transmembrane segment spans residues Phe-62–Leu-82. The Cytoplasmic portion of the chain corresponds to Arg-83 to Ser-93. The chain crosses the membrane as a helical span at residues Trp-94 to Leu-114. The Extracellular segment spans residues Ala-115–Cys-127. The helical transmembrane segment at Asn-128 to Leu-151 threads the bilayer. Residues Asn-152 to Thr-164 lie on the Cytoplasmic side of the membrane. A helical membrane pass occupies residues Leu-165–Ala-185. Residues Ser-186 to Lys-205 are Extracellular-facing. A helical membrane pass occupies residues Tyr-206–Ala-226. Residues Lys-227–Ser-242 lie on the Cytoplasmic side of the membrane. Residues Val-243–Leu-263 traverse the membrane as a helical segment. Residues Val-264 to Asn-285 lie on the Extracellular side of the membrane. Asn-285 is a glycosylation site (N-linked (GlcNAc...) asparagine). A helical transmembrane segment spans residues Val-286–Cys-306. Topologically, residues His-307–Ser-334 are cytoplasmic.

The protein belongs to the G-protein coupled receptor 1 family. Atypical chemokine receptor subfamily. In terms of tissue distribution, expressed in liver and brain.

The protein localises to the early endosome. The protein resides in the recycling endosome. Its subcellular location is the membrane. In terms of biological role, atypical chemokine receptor that controls chemokine levels and localization via high-affinity chemokine binding that is uncoupled from classic ligand-driven signal transduction cascades, resulting instead in chemokine sequestration, degradation, or transcytosis. Also known as interceptor (internalizing receptor) or chemokine-scavenging receptor or chemokine decoy receptor. Has a promiscuous chemokine-binding profile, interacting with inflammatory chemokines of both the CXC and the CC subfamilies but not with homeostatic chemokines. Acts as a receptor for chemokines including CCL2, CCL5, CCL7, CCL11, CCL13, CCL14, CCL17, CXCL5, CXCL6, IL8/CXCL8, CXCL11, GRO, RANTES, MCP-1 and TARC. May regulate chemokine bioavailability and, consequently, leukocyte recruitment through two distinct mechanisms: when expressed in endothelial cells, it sustains the abluminal to luminal transcytosis of tissue-derived chemokines and their subsequent presentation to circulating leukocytes; when expressed in erythrocytes, serves as blood reservoir of cognate chemokines but also as a chemokine sink, buffering potential surges in plasma chemokine levels. (Microbial infection) Acts as a receptor for the malaria parasite Plasmodium yoelii in mature erythrocytes but not reticulocytes. This Mus musculus (Mouse) protein is Atypical chemokine receptor 1 (Ackr1).